Here is a 217-residue protein sequence, read N- to C-terminus: MNQTLLSEFGNPTERVERALDALRHGRGVLVLDDEDRENEGDMIFSAESMTVEQMALTIRHGSGIVCLCLTEERRQQLELPMMVEKNSSHYQTAFTVTIEAAEGVTTGVSAADRLTTIRAAIADNARPSDLNRPGHVFPLRAQPGGVLTRGGHTEATVDLMTLAGLKPSGVLCELTNDDGSMAHAPEVIAFAKQHDMLVLTIEDLVAYRIAAERKAS.

D-ribulose 5-phosphate is bound by residues 37–38 (RE), aspartate 42, 150–154 (RGGHT), and glutamate 174. Glutamate 38 is a binding site for Mg(2+). Residue histidine 153 coordinates Mg(2+).

It belongs to the DHBP synthase family. In terms of assembly, homodimer. It depends on Mg(2+) as a cofactor. Requires Mn(2+) as cofactor.

The catalysed reaction is D-ribulose 5-phosphate = (2S)-2-hydroxy-3-oxobutyl phosphate + formate + H(+). Its pathway is cofactor biosynthesis; riboflavin biosynthesis; 2-hydroxy-3-oxobutyl phosphate from D-ribulose 5-phosphate: step 1/1. Its function is as follows. Catalyzes the conversion of D-ribulose 5-phosphate to formate and 3,4-dihydroxy-2-butanone 4-phosphate. The sequence is that of 3,4-dihydroxy-2-butanone 4-phosphate synthase from Pectobacterium atrosepticum (strain SCRI 1043 / ATCC BAA-672) (Erwinia carotovora subsp. atroseptica).